A 141-amino-acid chain; its full sequence is Galactose-6-phosphate isomerase subunit LacA (141 aa).

Belongs to the LacAB/RpiB family. As to quaternary structure, heteromultimeric protein consisting of LacA and LacB.

It carries out the reaction aldehydo-D-galactose 6-phosphate = keto-D-tagatose 6-phosphate. The protein operates within carbohydrate metabolism; D-galactose 6-phosphate degradation; D-tagatose 6-phosphate from D-galactose 6-phosphate: step 1/1. The polypeptide is Galactose-6-phosphate isomerase subunit LacA (Streptococcus pneumoniae serotype 2 (strain D39 / NCTC 7466)).